Here is a 69-residue protein sequence, read N- to C-terminus: DNA gyrase inhibitor YacG (69 aa).

Zn(2+) contacts are provided by C12, C15, C31, and C35. The interval 49 to 69 is disordered; it reads RVPVEPKPDEGETPDQAERPQ.

This sequence belongs to the DNA gyrase inhibitor YacG family. As to quaternary structure, interacts with GyrB. The cofactor is Zn(2+).

Inhibits all the catalytic activities of DNA gyrase by preventing its interaction with DNA. Acts by binding directly to the C-terminal domain of GyrB, which probably disrupts DNA binding by the gyrase. In Thiobacillus denitrificans (strain ATCC 25259 / T1), this protein is DNA gyrase inhibitor YacG.